We begin with the raw amino-acid sequence, 963 residues long: Importin-13 (963 aa).

HEAT repeat units lie at residues 24–54, 56–88, 95–135, 142–179, 194–231, 236–268, 276–325, 330–372, 375–438, 440–476, 487–522, 524–558, 562–600, 603–648, 676–716, 720–754, 761–803, 815–845, 860–893, and 897–931; these read ESVE…QAQV, PQAW…KTSR, TDQY…LSMM, AVAD…EFQT, LAVE…SWVQ, LQDC…NAIS, VNTL…ALLD, WQSF…DDIL, EAEK…YEML, AELL…FQSI, VVPG…WLAD, PVMI…CREC, LPPY…LLSA, VEEI…SNLF, PVVV…VKTL, FAPM…VHIF, FPPI…ALKR, VKAV…TELL, EDGR…FALN, and FSLL…QQIL. Residues 45–111 form the Importin N-terminal domain; sequence AQKWLMQAQV…KAQLFTQITR (67 aa).

This sequence belongs to the importin beta family. As to quaternary structure, interacts with UBC9, RAN, RBM8A, eIF-1A and PAX6.

The protein localises to the cytoplasm. The protein resides in the nucleus. Functions in nuclear protein import as nuclear transport receptor. Serves as receptor for nuclear localization signals (NLS) in cargo substrates. Is thought to mediate docking of the importin/substrate complex to the nuclear pore complex (NPC) through binding to nucleoporin and the complex is subsequently translocated through the pore by an energy requiring, Ran-dependent mechanism. At the nucleoplasmic side of the NPC, Ran binds to the importin, the importin/substrate complex dissociates and importin is re-exported from the nucleus to the cytoplasm where GTP hydrolysis releases Ran. The directionality of nuclear import is thought to be conferred by an asymmetric distribution of the GTP- and GDP-bound forms of Ran between the cytoplasm and nucleus. Mediates the nuclear import of UBC9, the RBM8A/MAGOH complex, PAX6 and probably other members of the paired homeobox family. Also mediates nuclear export of eIF-1A, and the cytoplasmic release of eIF-1A is triggered by the loading of import substrates onto IPO13. The polypeptide is Importin-13 (IPO13) (Pongo abelii (Sumatran orangutan)).